The sequence spans 124 residues: Small ribosomal subunit protein uS12 (124 aa).

The segment at 1–28 (MPTISQLIGSERKRLTRKTKSPALKSCP) is disordered. Residue Asp89 is modified to 3-methylthioaspartic acid. Residues 104–124 (TAGVKDRRQSRSKYGAKAPKD) are disordered.

Belongs to the universal ribosomal protein uS12 family. Part of the 30S ribosomal subunit. Contacts proteins S8 and S17. May interact with IF1 in the 30S initiation complex.

With S4 and S5 plays an important role in translational accuracy. Functionally, interacts with and stabilizes bases of the 16S rRNA that are involved in tRNA selection in the A site and with the mRNA backbone. Located at the interface of the 30S and 50S subunits, it traverses the body of the 30S subunit contacting proteins on the other side and probably holding the rRNA structure together. The combined cluster of proteins S8, S12 and S17 appears to hold together the shoulder and platform of the 30S subunit. The protein is Small ribosomal subunit protein uS12 of Prochlorococcus marinus (strain MIT 9312).